A 206-amino-acid chain; its full sequence is Urease accessory protein UreG (206 aa).

14–21 (GPVGSGKT) contacts GTP.

This sequence belongs to the SIMIBI class G3E GTPase family. UreG subfamily. Homodimer. UreD, UreF and UreG form a complex that acts as a GTP-hydrolysis-dependent molecular chaperone, activating the urease apoprotein by helping to assemble the nickel containing metallocenter of UreC. The UreE protein probably delivers the nickel.

It localises to the cytoplasm. Its function is as follows. Facilitates the functional incorporation of the urease nickel metallocenter. This process requires GTP hydrolysis, probably effectuated by UreG. The chain is Urease accessory protein UreG from Aliivibrio fischeri (strain ATCC 700601 / ES114) (Vibrio fischeri).